A 172-amino-acid chain; its full sequence is Trypsin inhibitor 1B (172 aa).

2 cysteine pairs are disulfide-bonded: C40-C84 and C133-C139.

The protein belongs to the protease inhibitor I3 (leguminous Kunitz-type inhibitor) family.

In terms of biological role, WTI-1B inhibits trypsin stoichiometrically. This chain is Trypsin inhibitor 1B, found in Psophocarpus tetragonolobus (Winged bean).